Consider the following 196-residue polypeptide: Putative 3-methyladenine DNA glycosylase (196 aa).

Belongs to the DNA glycosylase MPG family.

This chain is Putative 3-methyladenine DNA glycosylase, found in Chlorobium luteolum (strain DSM 273 / BCRC 81028 / 2530) (Pelodictyon luteolum).